Here is a 562-residue protein sequence, read N- to C-terminus: NAD-dependent malic enzyme (562 aa).

Residue Tyr-101 is the Proton donor of the active site. Arg-154 provides a ligand contact to NAD(+). Lys-172 serves as the catalytic Proton acceptor. The a divalent metal cation site is built by Glu-243, Asp-244, and Asp-267. The NAD(+) site is built by Asp-267 and Asn-415.

The protein belongs to the malic enzymes family. Homotetramer. It depends on Mg(2+) as a cofactor. Mn(2+) serves as cofactor.

It catalyses the reaction (S)-malate + NAD(+) = pyruvate + CO2 + NADH. The catalysed reaction is oxaloacetate + H(+) = pyruvate + CO2. This is NAD-dependent malic enzyme from Shewanella halifaxensis (strain HAW-EB4).